Consider the following 437-residue polypeptide: Minor fimbrial subunit HifE (437 aa).

An N-terminal signal peptide occupies residues 1–30 (MNKKSYINHYLTLFKVTTLLFTLSSNPVWA).

Belongs to the fimbrial protein family.

It localises to the fimbrium. Functionally, may be a minor structural protein required for pilus biogenesis. May be the adhesive component in the pili. This chain is Minor fimbrial subunit HifE (hifE), found in Haemophilus influenzae.